The sequence spans 280 residues: Hydroxyethylthiazole kinase (280 aa).

A substrate-binding site is contributed by Met58. Arg129 serves as a coordination point for ATP. Ala206 serves as a coordination point for substrate.

This sequence belongs to the Thz kinase family. Mg(2+) serves as cofactor.

It carries out the reaction 5-(2-hydroxyethyl)-4-methylthiazole + ATP = 4-methyl-5-(2-phosphooxyethyl)-thiazole + ADP + H(+). It functions in the pathway cofactor biosynthesis; thiamine diphosphate biosynthesis; 4-methyl-5-(2-phosphoethyl)-thiazole from 5-(2-hydroxyethyl)-4-methylthiazole: step 1/1. Functionally, thiazole kinase involved in thiamine salvage pathway. The protein is Hydroxyethylthiazole kinase (THIM) of Zea mays (Maize).